The following is a 647-amino-acid chain: tRNA 5-methylaminomethyl-2-thiouridine biosynthesis bifunctional protein MnmC (647 aa).

The tRNA (mnm(5)s(2)U34)-methyltransferase stretch occupies residues 1–227; the sequence is MLTWKNNLTP…KREMLIGSYS (227 aa). Residues 256 to 647 are FAD-dependent cmnm(5)s(2)U34 oxidoreductase; it reads VGAGIAGTTL…ARFLYRKVRK (392 aa).

The protein in the N-terminal section; belongs to the methyltransferase superfamily. tRNA (mnm(5)s(2)U34)-methyltransferase family. In the C-terminal section; belongs to the DAO family. It depends on FAD as a cofactor.

It localises to the cytoplasm. It catalyses the reaction 5-aminomethyl-2-thiouridine(34) in tRNA + S-adenosyl-L-methionine = 5-methylaminomethyl-2-thiouridine(34) in tRNA + S-adenosyl-L-homocysteine + H(+). In terms of biological role, catalyzes the last two steps in the biosynthesis of 5-methylaminomethyl-2-thiouridine (mnm(5)s(2)U) at the wobble position (U34) in tRNA. Catalyzes the FAD-dependent demodification of cmnm(5)s(2)U34 to nm(5)s(2)U34, followed by the transfer of a methyl group from S-adenosyl-L-methionine to nm(5)s(2)U34, to form mnm(5)s(2)U34. This Leptospira interrogans serogroup Icterohaemorrhagiae serovar Lai (strain 56601) protein is tRNA 5-methylaminomethyl-2-thiouridine biosynthesis bifunctional protein MnmC.